The primary structure comprises 160 residues: Transmembrane protein 216 (160 aa).

A run of 4 helical transmembrane segments spans residues 41–61, 68–88, 101–121, and 134–154; these read WYFA…GVIL, LILD…RLFY, LFVS…YLLL, and AVLL…ISIF.

As to quaternary structure, part of the tectonic-like complex (also named B9 complex).

Its subcellular location is the membrane. The protein localises to the cytoplasm. It is found in the cytoskeleton. It localises to the cilium basal body. Functionally, part of the tectonic-like complex which is required for tissue-specific ciliogenesis and may regulate ciliary membrane composition. This is Transmembrane protein 216 (tmem216) from Danio rerio (Zebrafish).